We begin with the raw amino-acid sequence, 270 residues long: PspA protein (270 aa).

A disordered region spans residues methionine 238–glutamine 270. A compositionally biased stretch (low complexity) spans glycine 240–threonine 258.

It belongs to the PspA/Vipp/IM30 family.

It is found in the cytoplasm. Functionally, involved in resistance to stress. Associates with and regulates lipid droplets (LDs) homeostasis under conditions of stress and may regulate non-replicating persistence (NRP). Could be involved in preservation of envelope integrity and tolerance to surface stress. The polypeptide is PspA protein (Mycobacterium tuberculosis (strain ATCC 25177 / H37Ra)).